The primary structure comprises 347 residues: MSILARPAAPSPRPNALANWLLLVAVLVFAIVVVGGITRLTESGLSITEWKPVRGIVPPLNQAEWLAEFENYKRIPQYAAFNLHMTLEGFKAIYFWEYMHRLLARGIGAVLAGVMIVAWWKRAIPAGYGWRMIGIFALGGLQGAIGWWMVYSGLSVRTEVSHIRLATHLIAALLIFSALVWTVLDLRRLARDPDARPARPTALAIAAVLILAVQIMLGAFVAGLRAGYAFATWPKMGDEWFPAGGWNVAQGLANLHENPIVVQFVHRWWAWAAAIAALAVARAARKRGAVGPVHAVATLIVVQIALGIATLLTGVDIAVAVAHQAVAVLLLAALLWAGHGLDKPKVS.

The next 8 membrane-spanning stretches (helical) occupy residues Leu-17–Ile-37, Gly-106–Ala-126, Met-132–Ser-152, Leu-165–Asp-185, Ala-202–Ala-222, Ile-260–Val-280, Ala-295–Val-315, and Ile-317–Ala-337. His-266 contributes to the heme binding site. His-323 contributes to the heme binding site.

This sequence belongs to the COX15/CtaA family. Type 2 subfamily. In terms of assembly, interacts with CtaB. Heme b serves as cofactor.

The protein resides in the cell membrane. It carries out the reaction Fe(II)-heme o + 2 A + H2O = Fe(II)-heme a + 2 AH2. The protein operates within porphyrin-containing compound metabolism; heme A biosynthesis; heme A from heme O: step 1/1. In terms of biological role, catalyzes the conversion of heme O to heme A by two successive hydroxylations of the methyl group at C8. The first hydroxylation forms heme I, the second hydroxylation results in an unstable dihydroxymethyl group, which spontaneously dehydrates, resulting in the formyl group of heme A. The polypeptide is Heme A synthase (Rhizorhabdus wittichii (strain DSM 6014 / CCUG 31198 / JCM 15750 / NBRC 105917 / EY 4224 / RW1) (Sphingomonas wittichii)).